The primary structure comprises 280 residues: Bis(5'-nucleosyl)-tetraphosphatase, symmetrical (280 aa).

This sequence belongs to the Ap4A hydrolase family.

It catalyses the reaction P(1),P(4)-bis(5'-adenosyl) tetraphosphate + H2O = 2 ADP + 2 H(+). Its function is as follows. Hydrolyzes diadenosine 5',5'''-P1,P4-tetraphosphate to yield ADP. This chain is Bis(5'-nucleosyl)-tetraphosphatase, symmetrical, found in Escherichia coli O17:K52:H18 (strain UMN026 / ExPEC).